The primary structure comprises 459 residues: Putative metabolite transport protein YdjK (459 aa).

Over 1–25 (MEQITKPHCGARLDRLPDCRWHSSM) the chain is Cytoplasmic. A helical membrane pass occupies residues 26–46 (FAIVAFGLLVCWSNAVGGLIL). The Periplasmic segment spans residues 47–60 (AQLKALGWTDNSTT). The helical transmembrane segment at 61–81 (ATFSAITTAGMFLGALVGGII) threads the bilayer. The Cytoplasmic segment spans residues 82-90 (GDKTGRRNA). A helical membrane pass occupies residues 91–111 (FILYEAIHIASMVVGAFSPNM). A topological domain (periplasmic) is located at residue D112. Residues 113–133 (FLIACRFVMGVGLGALLVTLF) traverse the membrane as a helical segment. Residues 134-153 (AGFTEYMPGRNRGTWSSRVS) lie on the Cytoplasmic side of the membrane. A helical membrane pass occupies residues 154–174 (FIGNWSYPLCSLIAMGLTPLI). Topologically, residues 175–181 (SAEWNWR) are periplasmic. Residues 182–202 (VQLLIPAILSLIATALAWRYF) traverse the membrane as a helical segment. The Cytoplasmic portion of the chain corresponds to 203–271 (PESPRWLESR…LLKRVILGSC (69 aa)). Residues 272–292 (VLIAMNVVQYTLINWLPTIFM) form a helical membrane-spanning segment. The Periplasmic portion of the chain corresponds to 293-301 (TQGINLKDS). A helical membrane pass occupies residues 302–322 (IVLNTMSMFGAPFGIFIAMLV). At 323-329 (MDKIPRK) the chain is on the cytoplasmic side. Residues 330–350 (TMGVGLLILIAVLGYIYSLQT) form a helical membrane-spanning segment. S351 is a topological domain (periplasmic). A helical transmembrane segment spans residues 352 to 372 (MLLITLIGFFLITFVYMYVCY). Over 373 to 399 (ASAVYVPEIWPTEAKLRGSGLANAVGR) the chain is Cytoplasmic. 2 helical membrane-spanning segments follow: residues 400–420 (ISGI…GVTG) and 421–441 (VFIL…TIGI). Over 442-459 (ETKGVSVESLSIDAVANK) the chain is Cytoplasmic.

Belongs to the major facilitator superfamily. Sugar transporter (TC 2.A.1.1) family.

The protein localises to the cell inner membrane. This chain is Putative metabolite transport protein YdjK (ydjK), found in Escherichia coli (strain K12).